We begin with the raw amino-acid sequence, 316 residues long: tRNA dimethylallyltransferase (316 aa).

Position 15–22 (15–22) interacts with ATP; the sequence is GPTASGKS. 17-22 contacts substrate; that stretch reads TASGKS. The interaction with substrate tRNA stretch occupies residues 40–43; the sequence is DSRQ.

The protein belongs to the IPP transferase family. Monomer. Mg(2+) is required as a cofactor.

The catalysed reaction is adenosine(37) in tRNA + dimethylallyl diphosphate = N(6)-dimethylallyladenosine(37) in tRNA + diphosphate. Catalyzes the transfer of a dimethylallyl group onto the adenine at position 37 in tRNAs that read codons beginning with uridine, leading to the formation of N6-(dimethylallyl)adenosine (i(6)A). The polypeptide is tRNA dimethylallyltransferase (Chlorobium limicola (strain DSM 245 / NBRC 103803 / 6330)).